Consider the following 73-residue polypeptide: Toxin Td5 (73 aa).

The N-terminal stretch at 1-7 (IGMVVEC) is a signal peptide. Residues 8 to 70 (KDGYLVGNDG…IWNSATNRCR (63 aa)) form the LCN-type CS-alpha/beta domain. 4 disulfide bridges follow: C18/C69, C22/C44, C30/C50, and C34/C52. R70 carries the arginine amide modification.

It belongs to the long (4 C-C) scorpion toxin superfamily. Sodium channel inhibitor family. Beta subfamily. Expressed by the venom gland.

The protein localises to the secreted. Beta toxins bind voltage-independently at site-4 of sodium channels (Nav) and shift the voltage of activation toward more negative potentials thereby affecting sodium channel activation and promoting spontaneous and repetitive firing. The protein is Toxin Td5 of Tityus discrepans (Venezuelan scorpion).